The primary structure comprises 50 residues: Small ribosomal subunit protein uS14 (50 aa).

Residues C15, C18, C33, and C36 each contribute to the Zn(2+) site.

Belongs to the universal ribosomal protein uS14 family. Zinc-binding uS14 subfamily. As to quaternary structure, part of the 30S ribosomal subunit. Zn(2+) serves as cofactor.

In terms of biological role, binds 16S rRNA, required for the assembly of 30S particles. The chain is Small ribosomal subunit protein uS14 from Methanosarcina acetivorans (strain ATCC 35395 / DSM 2834 / JCM 12185 / C2A).